We begin with the raw amino-acid sequence, 101 residues long: Small ribosomal subunit protein uS17 (101 aa).

It belongs to the universal ribosomal protein uS17 family. Part of the 30S ribosomal subunit.

Functionally, one of the primary rRNA binding proteins, it binds specifically to the 5'-end of 16S ribosomal RNA. The polypeptide is Small ribosomal subunit protein uS17 (Leifsonia xyli subsp. xyli (strain CTCB07)).